The primary structure comprises 350 residues: Flap endonuclease 1 (350 aa).

Residues 1 to 102 form an N-domain region; it reads MGVTELGKLI…IEIEKRRRVR (102 aa). Aspartate 31, aspartate 84, glutamate 156, glutamate 158, aspartate 177, aspartate 179, and aspartate 241 together coordinate Mg(2+). Residues 120-263 form an I-domain region; that stretch reads EARKYAQRAL…RALRLIQEYG (144 aa).

This sequence belongs to the XPG/RAD2 endonuclease family. FEN1 subfamily. As to quaternary structure, interacts with PCNA. PCNA stimulates the nuclease activity without altering cleavage specificity. The cofactor is Mg(2+).

Its function is as follows. Structure-specific nuclease with 5'-flap endonuclease and 5'-3' exonuclease activities involved in DNA replication and repair. During DNA replication, cleaves the 5'-overhanging flap structure that is generated by displacement synthesis when DNA polymerase encounters the 5'-end of a downstream Okazaki fragment. Binds the unpaired 3'-DNA end and kinks the DNA to facilitate 5' cleavage specificity. Cleaves one nucleotide into the double-stranded DNA from the junction in flap DNA, leaving a nick for ligation. Also involved in the base excision repair (BER) pathway. Acts as a genome stabilization factor that prevents flaps from equilibrating into structures that lead to duplications and deletions. Also possesses 5'-3' exonuclease activity on nicked or gapped double-stranded DNA. The sequence is that of Flap endonuclease 1 from Caldivirga maquilingensis (strain ATCC 700844 / DSM 13496 / JCM 10307 / IC-167).